The chain runs to 432 residues: Adenylosuccinate synthetase (432 aa).

GTP-binding positions include 12–18 (GDEGKGK) and 40–42 (GHT). Asp-13 (proton acceptor) is an active-site residue. Residues Asp-13 and Gly-40 each contribute to the Mg(2+) site. Residues 13–16 (DEGK), 38–41 (NAGH), Thr-130, Arg-144, Gln-225, Thr-240, and Arg-304 contribute to the IMP site. The active-site Proton donor is His-41. Residue 300 to 306 (ATTGRRR) participates in substrate binding. Residues Arg-306, 332–334 (KLD), and 415–417 (SVG) contribute to the GTP site.

It belongs to the adenylosuccinate synthetase family. Homodimer. Requires Mg(2+) as cofactor.

It is found in the cytoplasm. The catalysed reaction is IMP + L-aspartate + GTP = N(6)-(1,2-dicarboxyethyl)-AMP + GDP + phosphate + 2 H(+). The protein operates within purine metabolism; AMP biosynthesis via de novo pathway; AMP from IMP: step 1/2. Plays an important role in the de novo pathway of purine nucleotide biosynthesis. Catalyzes the first committed step in the biosynthesis of AMP from IMP. The protein is Adenylosuccinate synthetase of Syntrophus aciditrophicus (strain SB).